A 254-amino-acid chain; its full sequence is Leucyl/phenylalanyl-tRNA--protein transferase (254 aa).

It belongs to the L/F-transferase family.

It localises to the cytoplasm. The catalysed reaction is N-terminal L-lysyl-[protein] + L-leucyl-tRNA(Leu) = N-terminal L-leucyl-L-lysyl-[protein] + tRNA(Leu) + H(+). It carries out the reaction N-terminal L-arginyl-[protein] + L-leucyl-tRNA(Leu) = N-terminal L-leucyl-L-arginyl-[protein] + tRNA(Leu) + H(+). It catalyses the reaction L-phenylalanyl-tRNA(Phe) + an N-terminal L-alpha-aminoacyl-[protein] = an N-terminal L-phenylalanyl-L-alpha-aminoacyl-[protein] + tRNA(Phe). Functionally, functions in the N-end rule pathway of protein degradation where it conjugates Leu, Phe and, less efficiently, Met from aminoacyl-tRNAs to the N-termini of proteins containing an N-terminal arginine or lysine. This Burkholderia lata (strain ATCC 17760 / DSM 23089 / LMG 22485 / NCIMB 9086 / R18194 / 383) protein is Leucyl/phenylalanyl-tRNA--protein transferase.